The following is a 644-amino-acid chain: Phosphatidylinositol polyphosphate 5-phosphatase type IV (644 aa).

The tract at residues 1–193 is disordered; the sequence is MPSKAENLRP…RLPSLLPPRP (193 aa). 8 consecutive repeat copies span residues 10–13, 15–18, 28–31, 39–42, 55–58, 69–71, 72–74, and 75–78. The segment at 10–242 is 13 X 4 AA repeats of P-X-X-P; it reads PSEPAPQPPE…SLGPGRPRSP (233 aa). Residues 78 to 90 are compositionally biased toward basic and acidic residues; sequence PRLERALSLDDKG. S99 bears the Phosphoserine mark. Positions 107-118 are enriched in polar residues; it reads NGTSPSRGSVQS. Residues 121 to 124 form repeat 9; sequence PGAP. Residues 152 to 163 show a composition bias toward low complexity; the sequence is GSPSSGGNPLSG. Repeat copies occupy residues 169–172, 183–185, 190–193, and 236–239. Phosphoserine occurs at positions 241 and 256. C641 bears the Cysteine methyl ester mark. C641 carries S-farnesyl cysteine lipidation. Residues 642–644 constitute a propeptide, removed in mature form; the sequence is SVS.

This sequence belongs to the inositol 1,4,5-trisphosphate 5-phosphatase type IV family. In terms of assembly, interacts (when prenylated) with PDE6D; this is important for normal location in cilia. Detected in brain, heart, pancreas, testis and spleen.

It localises to the cytoplasm. It is found in the cytoskeleton. Its subcellular location is the cilium axoneme. The protein resides in the golgi apparatus. The protein localises to the golgi stack membrane. It localises to the cell membrane. It is found in the cell projection. Its subcellular location is the ruffle. The protein resides in the nucleus. The enzyme catalyses a 1,2-diacyl-sn-glycero-3-phospho-(1D-myo-inositol-4,5-bisphosphate) + H2O = a 1,2-diacyl-sn-glycero-3-phospho-(1D-myo-inositol 4-phosphate) + phosphate. It catalyses the reaction a 1,2-diacyl-sn-glycero-3-phospho-(1D-myo-inositol-3,4,5-trisphosphate) + H2O = a 1,2-diacyl-sn-glycero-3-phospho-(1D-myo-inositol-3,4-bisphosphate) + phosphate. The catalysed reaction is a 1,2-diacyl-sn-glycero-3-phospho-(1D-myo-inositol-3,5-bisphosphate) + H2O = a 1,2-diacyl-sn-glycero-3-phospho-(1D-myo-inositol-3-phosphate) + phosphate. Active in the presence of octyl-glucoside or Triton X-100, but completely inhibited by CTAB. In terms of biological role, phosphatidylinositol (PtdIns) phosphatase that specifically hydrolyzes the 5-phosphate of phosphatidylinositol-3,4,5-trisphosphate (PtdIns(3,4,5)P3), phosphatidylinositol 4,5-bisphosphate (PtdIns(4,5)P2) and phosphatidylinositol 3,5-bisphosphate (PtdIns(3,5)P2). Specific for lipid substrates, inactive towards water soluble inositol phosphates. Plays an essential role in the primary cilium by controlling ciliary growth and phosphoinositide 3-kinase (PI3K) signaling and stability. The chain is Phosphatidylinositol polyphosphate 5-phosphatase type IV (INPP5E) from Homo sapiens (Human).